Reading from the N-terminus, the 374-residue chain is Phosphate acyltransferase (374 aa).

Positions 323–374 (AEMVDPREPESNPRRRTRPLQVYSGSGPEVLPLGSLERTSSRCPEPVEDAQP) are disordered. The segment covering 326–335 (VDPREPESNP) has biased composition (basic and acidic residues).

The protein belongs to the PlsX family. As to quaternary structure, homodimer. Probably interacts with PlsY.

It localises to the cytoplasm. The catalysed reaction is a fatty acyl-[ACP] + phosphate = an acyl phosphate + holo-[ACP]. It participates in lipid metabolism; phospholipid metabolism. Its function is as follows. Catalyzes the reversible formation of acyl-phosphate (acyl-PO(4)) from acyl-[acyl-carrier-protein] (acyl-ACP). This enzyme utilizes acyl-ACP as fatty acyl donor, but not acyl-CoA. The sequence is that of Phosphate acyltransferase from Synechococcus sp. (strain JA-2-3B'a(2-13)) (Cyanobacteria bacterium Yellowstone B-Prime).